The primary structure comprises 424 residues: Glutamyl-tRNA reductase (424 aa).

Substrate is bound by residues 49–52 (TCNR), serine 107, 112–114 (EPQ), and glutamine 118. Cysteine 50 functions as the Nucleophile in the catalytic mechanism. 187–192 (GAGETI) contributes to the NADP(+) binding site.

It belongs to the glutamyl-tRNA reductase family. Homodimer.

The enzyme catalyses (S)-4-amino-5-oxopentanoate + tRNA(Glu) + NADP(+) = L-glutamyl-tRNA(Glu) + NADPH + H(+). It participates in porphyrin-containing compound metabolism; protoporphyrin-IX biosynthesis; 5-aminolevulinate from L-glutamyl-tRNA(Glu): step 1/2. Functionally, catalyzes the NADPH-dependent reduction of glutamyl-tRNA(Glu) to glutamate 1-semialdehyde (GSA). In Chromohalobacter salexigens (strain ATCC BAA-138 / DSM 3043 / CIP 106854 / NCIMB 13768 / 1H11), this protein is Glutamyl-tRNA reductase.